Consider the following 180-residue polypeptide: SAGA-associated factor 11 homolog (180 aa).

An SGF11-type zinc finger spans residues 98 to 119; sequence CSCPNCNRIVAASRFAPHLEKC. A disordered region spans residues 138–180; that stretch reads RDGGNYFGADEDDEDDADWSGEKRKKKIAPVRTNGSKKNGKTS. Residues 146-156 show a composition bias toward acidic residues; sequence ADEDDEDDADW.

This sequence belongs to the SGF11 family. In terms of assembly, component of some SAGA transcription coactivator-HAT complexes. Within the SAGA complex, participates in a subcomplex of SAGA called the DUB module (deubiquitination module).

It is found in the nucleus. Functionally, component of the transcription regulatory histone acetylation (HAT) complex SAGA, a multiprotein complex that activates transcription by remodeling chromatin and mediating histone acetylation and deubiquitination. Within the SAGA complex, participates in a subcomplex that specifically deubiquitinates histone H2B. The SAGA complex is recruited to specific gene promoters by activators, where it is required for transcription. The sequence is that of SAGA-associated factor 11 homolog from Aedes aegypti (Yellowfever mosquito).